The sequence spans 327 residues: 2-oxoisovalerate dehydrogenase subunit beta (327 aa).

Thiamine diphosphate contacts are provided by residues glutamate 29, 58 to 60, glutamine 82, and 86 to 89; these read LAE and FIMP. Residues 83-86 and histidine 129 each bind substrate; that span reads FADF. The active-site Proton acceptor is the histidine 129.

Heterotetramer of two alpha and two beta chains. Directly associated with ODBA in the E1 complex. Requires thiamine diphosphate as cofactor.

The enzyme catalyses N(6)-[(R)-lipoyl]-L-lysyl-[protein] + 3-methyl-2-oxobutanoate + H(+) = N(6)-[(R)-S(8)-2-methylpropanoyldihydrolipoyl]-L-lysyl-[protein] + CO2. The branched-chain alpha-keto dehydrogenase complex catalyzes the overall conversion of alpha-keto acids to acyl-CoA and CO(2). It contains multiple copies of three enzymatic components: branched-chain alpha-keto acid decarboxylase (E1), lipoamide acyltransferase (E2) and lipoamide dehydrogenase (E3). The polypeptide is 2-oxoisovalerate dehydrogenase subunit beta (bfmBAB) (Bacillus subtilis (strain 168)).